The chain runs to 351 residues: Nuclear inhibitor of protein phosphatase 1 (351 aa).

Residues Met-1 to Lys-142 are interaction with CDC5L, SF3B1 and MELK. Residues Tyr-49–Leu-101 form the FHA domain. Residues Met-143–Asn-224 are interaction with EED. Phosphothreonine; by CK2; in vitro is present on Thr-161. Ser-178 bears the Phosphoserine; by PKA; in vitro mark. 2 short sequence motifs (nuclear localization signal) span residues Gly-185–Ile-209 and Ile-210–Gly-240. The tract at residues Arg-191 to Arg-200 is involved in PP-1 inhibition. Ser-199 is modified (phosphoserine). Positions Arg-200–Phe-203 are involved in PP-1 binding. Ser-204 carries the post-translational modification Phosphoserine. The residue at position 249 (Ser-249) is a Phosphoserine. Phosphotyrosine is present on Tyr-264. Positions Ala-310–Glu-329 are interaction with EED. The tract at residues Ala-316 to Ile-351 is disordered. The tract at residues Pro-330–Ile-351 is RNA-binding. The segment at Lys-331–Lys-337 is involved in PP-1 inhibition. A Phosphotyrosine modification is found at Tyr-335.

As to quaternary structure, interacts with phosphorylated CDC5L, SF3B1 and MELK. Interacts with EED. Part of a complex consisting of PPP1R8, EED, HDAC2 and PP-1. Part of the spliceosome. Interacts with PPP1CA, PPP1CB and PPP1CC. In terms of processing, the N-terminus is blocked. Post-translationally, inactivated by phosphorylation on Ser-199 or Ser-204.

Its subcellular location is the nucleus. It is found in the nucleus speckle. Its function is as follows. Inhibitor subunit of the major nuclear protein phosphatase-1 (PP-1). It has RNA-binding activity but does not cleave RNA and may target PP-1 to RNA-associated substrates. May also be involved in pre-mRNA splicing. Binds DNA and might act as a transcriptional repressor. Seems to be required for cell proliferation. The protein is Nuclear inhibitor of protein phosphatase 1 (PPP1R8) of Bos taurus (Bovine).